Reading from the N-terminus, the 259-residue chain is UPF0758 protein Bphyt_3148 (259 aa).

Residues 137–259 (LLNSPEAVEN…VYSFARAGWP (123 aa)) enclose the MPN domain. The Zn(2+) site is built by His208, His210, and Asp221. Positions 208–221 (HNHPSGAVQPSASD) match the JAMM motif motif.

The protein belongs to the UPF0758 family.

The sequence is that of UPF0758 protein Bphyt_3148 from Paraburkholderia phytofirmans (strain DSM 17436 / LMG 22146 / PsJN) (Burkholderia phytofirmans).